We begin with the raw amino-acid sequence, 196 residues long: Small ribosomal subunit protein uS4c (196 aa).

Positions 22–42 (TRKTPKSGSNPKKKFHSGKKE) are disordered. The region spanning 89–169 (MRLDNILFRL…LPKHLTIDTL (81 aa)) is the S4 RNA-binding domain.

The protein belongs to the universal ribosomal protein uS4 family. Part of the 30S ribosomal subunit. Contacts protein S5. The interaction surface between S4 and S5 is involved in control of translational fidelity.

The protein localises to the plastid. Its subcellular location is the chloroplast. Functionally, one of the primary rRNA binding proteins, it binds directly to 16S rRNA where it nucleates assembly of the body of the 30S subunit. In terms of biological role, with S5 and S12 plays an important role in translational accuracy. This Melica altissima (Siberian melic grass) protein is Small ribosomal subunit protein uS4c (rps4).